The sequence spans 245 residues: 1-(5-phosphoribosyl)-5-[(5-phosphoribosylamino)methylideneamino] imidazole-4-carboxamide isomerase (245 aa).

Residue D8 is the Proton acceptor of the active site. Catalysis depends on D129, which acts as the Proton donor.

It belongs to the HisA/HisF family.

It localises to the cytoplasm. The enzyme catalyses 1-(5-phospho-beta-D-ribosyl)-5-[(5-phospho-beta-D-ribosylamino)methylideneamino]imidazole-4-carboxamide = 5-[(5-phospho-1-deoxy-D-ribulos-1-ylimino)methylamino]-1-(5-phospho-beta-D-ribosyl)imidazole-4-carboxamide. It functions in the pathway amino-acid biosynthesis; L-histidine biosynthesis; L-histidine from 5-phospho-alpha-D-ribose 1-diphosphate: step 4/9. This chain is 1-(5-phosphoribosyl)-5-[(5-phosphoribosylamino)methylideneamino] imidazole-4-carboxamide isomerase, found in Geotalea daltonii (strain DSM 22248 / JCM 15807 / FRC-32) (Geobacter daltonii).